The primary structure comprises 154 residues: Protein ripply (154 aa).

The WRPW motif signature appears at 38–41; sequence WRPW. 2 disordered regions span residues 54 to 86 and 121 to 154; these read IRER…FQHP and EDPA…PILN. Residues 85-119 form a ripply homology domain region; that stretch reads HPVKLHWSKPVYDYMYQYGKQLLDAFPVQATICIV. Acidic residues predominate over residues 121–140; sequence EDPAQSDDSDFESDYEDDSD.

The protein belongs to the ripply family. As to expression, in the late gastrula stage, expression appears in the dorsal presomitic mesoderm and in the first three pairs of nascent somites. Expressed strongly in forming somites and then expression is rapidly down-regulated except in the first somite pair where expression is maintained for a longer period. Also expressed in the presumptive notochord and in the tail bud at the 48 hour larval stage. Expression disappears by the 72 hour stage.

Its subcellular location is the nucleus. Its function is as follows. May play a role in somitogenesis. The polypeptide is Protein ripply (Branchiostoma belcheri (Amphioxus)).